Consider the following 477-residue polypeptide: MQVTETLNEGLKREIKVVVPAGDLEAKLAERLETARGRARINGFRPGKVPTAHLRKMYGKSFMAEIVNEILNDLSRSILAERNEKSATQPEVIMSEDEKEAEKVLDGKADFVFSLNYEVLPAIEVKDFSKIAVTREVVDISDEEVDEQVKRIASSTRTFETKKGKAENEDRVTIDYLGKLDGEPFEGGADNDAQLVLGSGQFIPGFEEQLIGLKAGDEKVITVTFPAEYGAAHLAGKEATFDIKVKEVAKPNELVLDDETAKKLGIESLERLRQVVREQIESQYGQVTRQKVKRQILDALDGDYQFETPQKLVDAEFNNIWQQINFDLQQAGRTFEDEETTEEAAREEYRKLAERRVRLGLVLSEIGEKAGVEVTEEELQRAVYDQVRRYPDQEKEIYDFLRRTPDAVANLRAPIFEEKVVDHLLANINVTDKKVSKEELTAEDEDAASEAKPAKKAAAKKKAAPKKKAEEGKSEEA.

Residues 169–254 (EDRVTIDYLG…VKEVAKPNEL (86 aa)) form the PPIase FKBP-type domain. The segment at 435 to 477 (VSKEELTAEDEDAASEAKPAKKAAAKKKAAPKKKAEEGKSEEA) is disordered. The segment covering 454–466 (AKKAAAKKKAAPK) has biased composition (basic residues). Positions 467 to 477 (KKAEEGKSEEA) are enriched in basic and acidic residues.

Belongs to the FKBP-type PPIase family. Tig subfamily.

The protein localises to the cytoplasm. It carries out the reaction [protein]-peptidylproline (omega=180) = [protein]-peptidylproline (omega=0). Its function is as follows. Involved in protein export. Acts as a chaperone by maintaining the newly synthesized protein in an open conformation. Functions as a peptidyl-prolyl cis-trans isomerase. The chain is Trigger factor from Brucella suis biovar 1 (strain 1330).